The sequence spans 530 residues: T-complex protein 1 subunit zeta (530 aa).

Residue G38 coordinates ADP. G38 is a binding site for ATP. D89 is a binding site for Mg(2+). G90, T91, T92, S93, T157, K158, and A410 together coordinate ADP. 3 residues coordinate ATP: G90, T91, and T92. Residues A410, G411, D495, and K500 each contribute to the ATP site. D495 serves as a coordination point for ADP.

As to quaternary structure, component of the chaperonin-containing T-complex (TRiC), a hexadecamer composed of two identical back-to-back stacked rings enclosing a protein folding chamber. Each ring is made up of eight different subunits: TCP1/CCT1, CCT2, CCT3, CCT4, CCT5, CCT6A/CCT6, CCT7, CCT8. Interacts with PACRG.

The protein resides in the cytoplasm. It carries out the reaction ATP + H2O = ADP + phosphate + H(+). In terms of biological role, component of the chaperonin-containing T-complex (TRiC), a molecular chaperone complex that assists the folding of actin, tubulin and other proteins upon ATP hydrolysis. The sequence is that of T-complex protein 1 subunit zeta from Gallus gallus (Chicken).